The sequence spans 160 residues: UPF0262 protein Oant_0325 (160 aa).

It belongs to the UPF0262 family.

This is UPF0262 protein Oant_0325 from Brucella anthropi (strain ATCC 49188 / DSM 6882 / CCUG 24695 / JCM 21032 / LMG 3331 / NBRC 15819 / NCTC 12168 / Alc 37) (Ochrobactrum anthropi).